The chain runs to 144 residues: Putative protein PHLOEM PROTEIN 2-LIKE B4 (144 aa).

The chain is Putative protein PHLOEM PROTEIN 2-LIKE B4 (PP2B4) from Arabidopsis thaliana (Mouse-ear cress).